The chain runs to 513 residues: MFELPSGAEIQSIIATLKASVGFFIPEIYLSLLFMILIVVDLVVKGRKSTLLSVFSLVGLAGSLYFIYQQHAMQAGEFFFGMYVLDGFAIFFKYFFVLSGMLAVVITMADEQFEREISSMGEYYALVVAMVVGMMMMASSSDLLMIFLSMELVSFTAFILAGYFKSNMRSSEAALKYLIYGAVSSGLMIYGFSLIYGVTAQTNLIAISRELALHGADSFVMLFAALLVLAGFGYKIGAVPFHFWAPDVYEGSPTPVTAYLSVASKAAGFALLMRFVYVALPHTNNVQAATLGIDWFTLLVILAVASMIYGNVVALWQKNVKRLLAYSSIAHAGYALLGVIVMDKLGTQATLFYLLSYLLMNFGAFFVVVLIANRTGSESLDDYRGLGKSMPLAGAALTVFLISLVGLPPTIGFIGKLMVFSALIAKGSIFMWLALIGILTSVISLYYYMLIPLNMYLREPVQHASSNTGTQPRLVAQLFMGALMLLTIYFGLFFAPLSDFARYSASIFGLQLQ.

The next 14 membrane-spanning stretches (helical) occupy residues 20–40 (SVGF…LIVV), 49–69 (STLL…FIYQ), 88–108 (FAIF…VITM), 117–137 (ISSM…MMMM), 144–164 (LMIF…AGYF), 178–198 (LIYG…IYGV), 219–239 (FVML…IGAV), 260–280 (LSVA…YVAL), 295–315 (WFTL…VVAL), 323–343 (LLAY…IVMD), 351–371 (LFYL…VVLI), 394–414 (GAAL…IGFI), 429–451 (IFMW…YMLI), and 474–494 (LVAQ…GLFF).

It belongs to the complex I subunit 2 family. As to quaternary structure, NDH-1 is composed of 14 different subunits. Subunits NuoA, H, J, K, L, M, N constitute the membrane sector of the complex.

The protein resides in the cell inner membrane. It catalyses the reaction a quinone + NADH + 5 H(+)(in) = a quinol + NAD(+) + 4 H(+)(out). NDH-1 shuttles electrons from NADH, via FMN and iron-sulfur (Fe-S) centers, to quinones in the respiratory chain. The immediate electron acceptor for the enzyme in this species is believed to be a menaquinone. Couples the redox reaction to proton translocation (for every two electrons transferred, four hydrogen ions are translocated across the cytoplasmic membrane), and thus conserves the redox energy in a proton gradient. The sequence is that of NADH-quinone oxidoreductase subunit N from Chlorobium chlorochromatii (strain CaD3).